Here is a 651-residue protein sequence, read N- to C-terminus: Protein SCARECROW 1 (651 aa).

2 disordered regions span residues 1–33 (MGSSSLLLFPSSSSSATHSSYSPSSSSHAITSL) and 188–277 (SDPA…KQRD). Pro residues predominate over residues 190–228 (PAPPPPPPPSHPALLPPDATAPPPPPTSVAALPPPPPPQ). The stretch at 253–280 (TAEETAAAAAAAKERKEEQRRKQRDEEG) forms a coiled coil. Over residues 254–263 (AEETAAAAAA) the composition is skewed to low complexity. Residues 264–277 (AKERKEEQRRKQRD) show a composition bias toward basic and acidic residues. Residues 274–644 (KQRDEEGLHL…LCLLTASAWR (371 aa)) enclose the GRAS domain. The leucine repeat I (LRI) stretch occupies residues 281–345 (LHLLTLLLQC…VSSCLGLYAP (65 aa)). Positions 288 to 292 (LQCAE) match the LxCxE motif motif. Positions 364–429 (FQVFNGISPF…GGPPRVRLTG (66 aa)) are VHIID. The VHIID motif lies at 395–399 (VHIID). Positions 439 to 471 (ATGKRLSDFADTLGLPFEFCPVADKAGNLDPEK) are leucine repeat II (LRII). Positions 480–567 (VAVHWLRHSL…QQLLSREIRN (88 aa)) are PFYRE. Positions 570 to 644 (AVGGPARTGD…LCLLTASAWR (75 aa)) are SAW.

This sequence belongs to the GRAS family. As to quaternary structure, interacts with SHR1, but not with SHR2. Expressed in the initial daughter cell before its asymmetric division and remains expressed in the endodermal cell layer after the division.

The protein localises to the nucleus. Functionally, transcription factor required for quiescent center cells specification and maintenance of surrounding stem cells, and for the asymmetric cell division involved in radial pattern formation in roots. Essential for cell division but not differentiation of the ground tissue. Regulates the radial organization of the shoot axial organs. Restricts SHR movment and sequesters it into the nucleus of the endodermis. The sequence is that of Protein SCARECROW 1 (SCR1) from Oryza sativa subsp. japonica (Rice).